A 239-amino-acid chain; its full sequence is ATP-dependent dethiobiotin synthetase BioD (239 aa).

15 to 20 contacts ATP; that stretch reads EIGKTF. T19 contacts Mg(2+). The active site involves K40. ATP-binding positions include D57, 118–121, and 178–179; these read EGVG and NH. D57 and E118 together coordinate Mg(2+).

It belongs to the dethiobiotin synthetase family. In terms of assembly, homodimer. Mg(2+) is required as a cofactor.

It localises to the cytoplasm. The enzyme catalyses (7R,8S)-7,8-diammoniononanoate + CO2 + ATP = (4R,5S)-dethiobiotin + ADP + phosphate + 3 H(+). It functions in the pathway cofactor biosynthesis; biotin biosynthesis; biotin from 7,8-diaminononanoate: step 1/2. Its function is as follows. Catalyzes a mechanistically unusual reaction, the ATP-dependent insertion of CO2 between the N7 and N8 nitrogen atoms of 7,8-diaminopelargonic acid (DAPA, also called 7,8-diammoniononanoate) to form a ureido ring. This is ATP-dependent dethiobiotin synthetase BioD from Burkholderia cenocepacia (strain ATCC BAA-245 / DSM 16553 / LMG 16656 / NCTC 13227 / J2315 / CF5610) (Burkholderia cepacia (strain J2315)).